The chain runs to 292 residues: Protease HtpX homolog (292 aa).

The next 2 helical transmembrane spans lie at 4–24 and 38–58; these read IALFLLTNVAVVVVLGIVASL and LGALLGFAFIMGFGGAIISLL. His144 contributes to the Zn(2+) binding site. Glu145 is a catalytic residue. Residue His148 participates in Zn(2+) binding. The next 2 membrane-spanning stretches (helical) occupy residues 152–172 and 199–219; these read GDMVTMALIQGVMNTFVVFLS and ITTIVLDIVLGFLAAIIVAWF. Residue Glu224 participates in Zn(2+) binding.

The protein belongs to the peptidase M48B family. Zn(2+) serves as cofactor.

The protein localises to the cell inner membrane. The chain is Protease HtpX homolog from Acidovorax ebreus (strain TPSY) (Diaphorobacter sp. (strain TPSY)).